Consider the following 354-residue polypeptide: Peptide chain release factor 1 (354 aa).

At Gln-232 the chain carries N5-methylglutamine.

This sequence belongs to the prokaryotic/mitochondrial release factor family. Post-translationally, methylated by PrmC. Methylation increases the termination efficiency of RF1.

The protein resides in the cytoplasm. In terms of biological role, peptide chain release factor 1 directs the termination of translation in response to the peptide chain termination codons UAG and UAA. The sequence is that of Peptide chain release factor 1 from Phytoplasma australiense.